A 363-amino-acid polypeptide reads, in one-letter code: uncharacterized protein (363 aa).

Residues Q198, Y225, E246, and D291 each coordinate S-adenosyl-L-methionine. The Nucleophile role is filled by C318.

This sequence belongs to the class I-like SAM-binding methyltransferase superfamily. RNA M5U methyltransferase family.

This is an uncharacterized protein from Mycoplasma mobile (strain ATCC 43663 / 163K / NCTC 11711) (Mesomycoplasma mobile).